The primary structure comprises 146 residues: Hemoglobin subunit beta-2 (146 aa).

The Globin domain occupies 2 to 146 (HWSAEEKQLI…VAHALARRYH (145 aa)). 2 residues coordinate heme b: His-63 and His-92.

Belongs to the globin family. In terms of assembly, heterotetramer of two alpha chains and two beta chains. As to expression, red blood cells.

Involved in oxygen transport from the lung to the various peripheral tissues. This is Hemoglobin subunit beta-2 (HBB2) from Naja naja (Indian cobra).